We begin with the raw amino-acid sequence, 322 residues long: NADH-quinone oxidoreductase subunit H (322 aa).

The next 8 membrane-spanning stretches (helical) occupy residues 12–32, 79–99, 111–131, 151–171, 183–203, 234–254, 262–282, and 301–321; these read IGKA…MSFI, IFVL…AVVP, VGLL…LFAG, LSYE…TGSF, LWNV…GVAV, FFVG…TLFF, LPPF…FILL, and VCLP…LMNA.

It belongs to the complex I subunit 1 family. In terms of assembly, NDH-1 is composed of 14 different subunits. Subunits NuoA, H, J, K, L, M, N constitute the membrane sector of the complex.

The protein resides in the cell inner membrane. The enzyme catalyses a quinone + NADH + 5 H(+)(in) = a quinol + NAD(+) + 4 H(+)(out). NDH-1 shuttles electrons from NADH, via FMN and iron-sulfur (Fe-S) centers, to quinones in the respiratory chain. The immediate electron acceptor for the enzyme in this species is believed to be ubiquinone. Couples the redox reaction to proton translocation (for every two electrons transferred, four hydrogen ions are translocated across the cytoplasmic membrane), and thus conserves the redox energy in a proton gradient. This subunit may bind ubiquinone. The polypeptide is NADH-quinone oxidoreductase subunit H (Aeromonas hydrophila subsp. hydrophila (strain ATCC 7966 / DSM 30187 / BCRC 13018 / CCUG 14551 / JCM 1027 / KCTC 2358 / NCIMB 9240 / NCTC 8049)).